Here is a 102-residue protein sequence, read N- to C-terminus: Citrate lyase acyl carrier protein (102 aa).

Position 14 is an O-(phosphoribosyl dephospho-coenzyme A)serine (Ser14).

This sequence belongs to the CitD family. In terms of assembly, oligomer with a subunit composition of (alpha,beta,gamma)6.

It is found in the cytoplasm. In terms of biological role, covalent carrier of the coenzyme of citrate lyase. This chain is Citrate lyase acyl carrier protein, found in Streptococcus pyogenes serotype M4 (strain MGAS10750).